A 62-amino-acid polypeptide reads, in one-letter code: Cecropin-D (62 aa).

The first 22 residues, 1 to 22 (MNFTKILFFVVACVFAMRTVSA), serve as a signal peptide directing secretion. The propeptide at 23 to 24 (AP) is removed by a dipeptidylpeptidase. Lysine 60 is modified (lysine amide).

It belongs to the cecropin family.

The protein resides in the secreted. Functionally, cecropins have lytic and antibacterial activity against several Gram-positive and Gram-negative bacteria. The polypeptide is Cecropin-D (Hyalophora cecropia (Cecropia moth)).